Consider the following 438-residue polypeptide: MPYFPDVDRVRYEGPDSDSPLAFRHYDADKLVLGKPMREHLRMAACYWHTFVWPGADMFGVGTFKRPWQGSGDPMELAIGKAEAAFEFFSKLGIDYYSFHDTDVAPEGASLKEYRHNFAHMVDHLERHQQQSGIKLLWGTANCFSNPRFAAGAASNPDPEVFAYAATQVFSAMNATQRLKGSNYVLWGGREGYETLLNTDLKREREQLGRFMRMVVEHKHKIGFKGDLLIEPKPQEPTKHQYDYDSATVFGFLQQYGLENEIKVNIEANHATLAGHSFHHEIATAVSLGIFGSIDANRGDPQNGWDTDQFPNSVEEMTLATYEILKAGGFTNGGFNFDSKVRRQSLDDIDLFHGHVAAMDVLALALERAAAMLQNDKLQHFKDQRYAGWQQPFGQSVLAGEFSLASLAEHAFANELNPQAVSGRQELLEGVVNRFIYA.

Active-site residues include histidine 100 and aspartate 103. Mg(2+) contacts are provided by glutamate 231, glutamate 267, histidine 270, aspartate 295, aspartate 306, aspartate 308, and aspartate 338.

This sequence belongs to the xylose isomerase family. In terms of assembly, homotetramer. Mg(2+) is required as a cofactor.

It is found in the cytoplasm. It carries out the reaction alpha-D-xylose = alpha-D-xylulofuranose. This chain is Xylose isomerase, found in Pseudomonas syringae pv. syringae (strain B728a).